Reading from the N-terminus, the 469-residue chain is Cell division protein FtsP (469 aa).

Positions 1-29 (MPRLSRRQLLKTAAISTALSTVPAPLLAA) form a signal peptide, tat-type signal. Residues 228-286 (IRLRLLNASLARAYDLRLDNDQEMLLIAQDLSFLPKAKSVKSLVLSPGERAEILVNMNE) form the Plastocyanin-like domain.

Belongs to the FtsP family. Post-translationally, predicted to be exported by the Tat system. The position of the signal peptide cleavage has not been experimentally proven.

It is found in the periplasm. In terms of biological role, cell division protein that is required for growth during stress conditions. May be involved in protecting or stabilizing the divisomal assembly under conditions of stress. The sequence is that of Cell division protein FtsP from Haemophilus influenzae (strain 86-028NP).